The chain runs to 332 residues: RING finger protein 225 (332 aa).

The interval 1 to 55 (MPCPRLPWLRRHRTSQGSGPSSPSTVSAPNSPSRGEDEDAEEEEGDGTPGSGPIL) is disordered. Positions 15 to 27 (SQGSGPSSPSTVS) are enriched in low complexity. The span at 36-46 (EDEDAEEEEGD) shows a compositional bias: acidic residues. The segment at 63 to 111 (CLICVSPFDGIFKLPKRLDCGHVFCLECLARLSLATAGGGDAVACPMCR) adopts an RING-type zinc-finger fold. Residues 121–187 (GLPALPTQPG…PPPLRLGRPL (67 aa)) form a disordered region. The chain crosses the membrane as a helical span at residues 205–225 (ALAVLVAAGLVVSGVYIFFLI). Residues 259-332 (THAWTRRPTK…ADGKKVQLQQ (74 aa)) are disordered. Basic and acidic residues-rich tracts occupy residues 280–295 (ATKD…KDPV) and 323–332 (ADGKKVQLQQ).

It is found in the membrane. In Mus musculus (Mouse), this protein is RING finger protein 225.